The following is a 549-amino-acid chain: Glutamyl-tRNA(Gln) amidotransferase subunit B, chloroplastic/mitochondrial (549 aa).

It belongs to the GatB/GatE family. GatB subfamily. In terms of assembly, subunit of the heterotrimeric GatCAB amidotransferase (AdT) complex, composed of A, B and C subunits.

The protein localises to the mitochondrion. It localises to the plastid. The protein resides in the chloroplast. It catalyses the reaction L-glutamyl-tRNA(Gln) + L-glutamine + ATP + H2O = L-glutaminyl-tRNA(Gln) + L-glutamate + ADP + phosphate + H(+). Functionally, allows the formation of correctly charged Gln-tRNA(Gln) through the transamidation of misacylated Glu-tRNA(Gln) in chloroplasts and mitochondria. The reaction takes place in the presence of glutamine and ATP through an activated gamma-phospho-Glu-tRNA(Gln). The polypeptide is Glutamyl-tRNA(Gln) amidotransferase subunit B, chloroplastic/mitochondrial (Ricinus communis (Castor bean)).